The chain runs to 384 residues: Erythronate-4-phosphate dehydrogenase (384 aa).

Residues Ser45 and Thr66 each coordinate substrate. Residues Asp147 and Thr177 each contribute to the NAD(+) site. Arg210 is an active-site residue. Asp234 contacts NAD(+). Glu239 is an active-site residue. His256 acts as the Proton donor in catalysis. Gly259 lines the NAD(+) pocket. Tyr260 lines the substrate pocket.

This sequence belongs to the D-isomer specific 2-hydroxyacid dehydrogenase family. PdxB subfamily. In terms of assembly, homodimer.

It localises to the cytoplasm. The catalysed reaction is 4-phospho-D-erythronate + NAD(+) = (R)-3-hydroxy-2-oxo-4-phosphooxybutanoate + NADH + H(+). It participates in cofactor biosynthesis; pyridoxine 5'-phosphate biosynthesis; pyridoxine 5'-phosphate from D-erythrose 4-phosphate: step 2/5. Its function is as follows. Catalyzes the oxidation of erythronate-4-phosphate to 3-hydroxy-2-oxo-4-phosphonooxybutanoate. In Marinobacter nauticus (strain ATCC 700491 / DSM 11845 / VT8) (Marinobacter aquaeolei), this protein is Erythronate-4-phosphate dehydrogenase.